A 175-amino-acid polypeptide reads, in one-letter code: Adenine phosphoribosyltransferase (175 aa).

This sequence belongs to the purine/pyrimidine phosphoribosyltransferase family. As to quaternary structure, homodimer.

The protein resides in the cytoplasm. The enzyme catalyses AMP + diphosphate = 5-phospho-alpha-D-ribose 1-diphosphate + adenine. Its pathway is purine metabolism; AMP biosynthesis via salvage pathway; AMP from adenine: step 1/1. Functionally, catalyzes a salvage reaction resulting in the formation of AMP, that is energically less costly than de novo synthesis. The protein is Adenine phosphoribosyltransferase of Oenococcus oeni (strain ATCC BAA-331 / PSU-1).